We begin with the raw amino-acid sequence, 339 residues long: Alpha-N-dichloroacetyl-p-aminophenylserinol N-oxygenase (339 aa).

The segment covering 1–19 (MRDHTDEKSEAAGNDDGHV) has biased composition (basic and acidic residues). The tract at residues 1 to 22 (MRDHTDEKSEAAGNDDGHVRIG) is disordered. Fe cation is bound by residues Glu109, Glu144, His147, Glu205, His232, Glu236, and His239.

Belongs to the AurF N-oxygenase family. Fe(2+) is required as a cofactor.

It catalyses the reaction alpha-N-dichloroacetyl-p-aminophenylserinol + AH2 + 2 O2 = chloramphenicol + A + 2 H2O. It participates in antibiotic biosynthesis. Functionally, involved in chloramphenicol biosynthesis. Catalyzes the six-electron oxidation of an aryl-amine precursor of chloramphenicol (NH2-CAM) to yield the aryl-nitro group of chloramphenicol (CAM). During catalysis, upon exposure of the diferrous cluster to O(2), ClmI forms an exceptionally long-lived peroxo intermediate (CmlI-peroxo), which reacts with NH2-CAM to form CAM. This chain is Alpha-N-dichloroacetyl-p-aminophenylserinol N-oxygenase, found in Streptomyces venezuelae (strain ATCC 10712 / CBS 650.69 / DSM 40230 / JCM 4526 / NBRC 13096 / PD 04745).